Reading from the N-terminus, the 777-residue chain is Double zinc ribbon and ankyrin repeat-containing protein 1 (777 aa).

Residues 161–176 are compositionally biased toward basic and acidic residues; that stretch reads QVGERTDPKTLKDLRF. The tract at residues 161 to 202 is disordered; the sequence is QVGERTDPKTLKDLRFSESPLEIPAHSGGSGSRPPTRQSQSP. The segment covering 193–202 has biased composition (polar residues); the sequence is RPPTRQSQSP. Serine 201 is subject to Phosphoserine. 2 consecutive DZANK-type zinc fingers follow at residues 230–289 and 358–406; these read CAHC…CVVC and CSRC…GSCG. ANK repeat units lie at residues 442–473 and 477–506; these read NIPLPRSDAGTKRDIGTQTVGLFYPSGKLLAK and EIASQKQRQEKMSDHKPLLTAISPGRGYWR.

Interacts with NINL. Associates with DYNC1H1 and multiple dynein intermediate and light chains as well as actin-binding proteins.

The protein resides in the cytoplasm. It localises to the cytoskeleton. The protein localises to the microtubule organizing center. It is found in the centrosome. Its subcellular location is the cilium basal body. Functionally, involved in vesicle transport in photoreceptor cells. This is Double zinc ribbon and ankyrin repeat-containing protein 1 (DZANK1) from Macaca fascicularis (Crab-eating macaque).